The following is a 606-amino-acid chain: DNA primase (606 aa).

The CHC2-type zinc finger occupies 40-64 (CPFHQEKTPSFYVVPEKRFYFCHGC). A Toprim domain is found at 256-349 (KAAVLVEGYF…DPDTFARREG (94 aa)). Positions 262, 307, and 309 each coordinate Mg(2+). The segment at 429–451 (VPLPKPAGGDAPPSSPNRPAPPL) is disordered. The segment covering 441–451 (PSSPNRPAPPL) has biased composition (pro residues).

This sequence belongs to the DnaG primase family. Monomer. Interacts with DnaB. It depends on Zn(2+) as a cofactor. The cofactor is Mg(2+).

The catalysed reaction is ssDNA + n NTP = ssDNA/pppN(pN)n-1 hybrid + (n-1) diphosphate.. Functionally, RNA polymerase that catalyzes the synthesis of short RNA molecules used as primers for DNA polymerase during DNA replication. The polypeptide is DNA primase (Myxococcus xanthus).